The following is a 243-amino-acid chain: UPF0246 protein SUB1767 (243 aa).

It belongs to the UPF0246 family.

The chain is UPF0246 protein SUB1767 from Streptococcus uberis (strain ATCC BAA-854 / 0140J).